Here is a 251-residue protein sequence, read N- to C-terminus: Endonuclease NucS (251 aa).

Basic and acidic residues predominate over residues Leu-230–Arg-240. The interval Leu-230–Pro-251 is disordered.

The protein belongs to the NucS endonuclease family. As to quaternary structure, homodimer. Interacts with PCNA.

It is found in the cytoplasm. With respect to regulation, activity is modulated by PCNA. PCNA increases the binding affinity of NucS towards ssDNA as well as branched DNA substrates carrying either 3' or 5' flaps. PCNA is also required for optimal loading of NucS on its substrates and to direct activity towards ss/dsDNA junction. Cleaves both 3' and 5' ssDNA extremities of branched DNA structures. Binds to ssDNA. This chain is Endonuclease NucS, found in Pyrococcus abyssi (strain GE5 / Orsay).